The following is a 114-amino-acid chain: Protein ORF3 (114 aa).

Hydrophobic regions lie at residues 6-22 and 33-53; these read CALG…CLCC and AVVG…GLIL. Residues 28–68 are interaction with host HPX; the sequence is VSRLAAVVGGAAAVPAVVSGVTGLILSPSQSPIFIQPTPLP. The tract at residues 72–114 is homodimerization, and interaction with host AMBP/bikunin; that stretch reads PLRPGLDLAFANQPGHLAPLGEIRPSAPPLPPVADLPQPGLRR. The disordered stretch occupies residues 91–114; it reads LGEIRPSAPPLPPVADLPQPGLRR. The segment at 95–104 is interaction with host SRC, HCK, FYN, PIK3R3 and GRB2; sequence RPSAPPLPPV. The PTAP/PSAP motif motif lies at 96 to 99; the sequence is PSAP.

The protein belongs to the hepevirus ORF3 protein family. In terms of assembly, forms homooligomers. Interacts with host SRC, HCK, FYN, PIK3R3 and GRB2 (via SH3 domain); binding does not activate the kinases. Interacts with host AMBP/bikunin and AMBP/alpha-1-microglobulin peptides. Interacts with host HPX/hemopexin. Interacts (when phosphorylated) with capsid protein ORF2. Interacts with host TSG101; this interaction plays a role in viral release from the host cell. Interacts with host SIRPA; this interaction down-regulates the phosphorylation of host IRF3. Palmitoylated in the N-terminus.

Its subcellular location is the host endoplasmic reticulum membrane. It localises to the host cytoplasm. The protein localises to the host cytoskeleton. It is found in the virion. The protein resides in the host cell membrane. In terms of biological role, small multifunctional phosphoprotein involved in virion morphogenesis, egress and counteracting host innate immunity. Plays critical roles in the final steps of viral release by interacting with host TSG101, a member of the vacuolar protein-sorting pathway and using other cellular host proteins involved in vesicle formation pathway. Also acts as a viroporin and forms ion conductive pores allowing viral particle release. Impairs the generation of type I interferon by down-regulating host TLR3 and TLR7 as well as their downstream signaling pathways. Down-regulates the phosphorylation of host IRF3 via the interaction with host SIRP-alpha, thereby inhibiting IFN-I expression. Interacts with host microtubules. This chain is Protein ORF3, found in Hepatitis E virus genotype 2 (isolate Human/Mexico) (HEV-2).